The sequence spans 150 residues: D-aminoacyl-tRNA deacylase (150 aa).

The Gly-cisPro motif, important for rejection of L-amino acids motif lies at 140–141 (GP).

Belongs to the DTD family. As to quaternary structure, homodimer.

The protein localises to the cytoplasm. It carries out the reaction glycyl-tRNA(Ala) + H2O = tRNA(Ala) + glycine + H(+). The enzyme catalyses a D-aminoacyl-tRNA + H2O = a tRNA + a D-alpha-amino acid + H(+). Functionally, an aminoacyl-tRNA editing enzyme that deacylates mischarged D-aminoacyl-tRNAs. Also deacylates mischarged glycyl-tRNA(Ala), protecting cells against glycine mischarging by AlaRS. Acts via tRNA-based rather than protein-based catalysis; rejects L-amino acids rather than detecting D-amino acids in the active site. By recycling D-aminoacyl-tRNA to D-amino acids and free tRNA molecules, this enzyme counteracts the toxicity associated with the formation of D-aminoacyl-tRNA entities in vivo and helps enforce protein L-homochirality. This Eremothecium gossypii (strain ATCC 10895 / CBS 109.51 / FGSC 9923 / NRRL Y-1056) (Yeast) protein is D-aminoacyl-tRNA deacylase (DTD1).